The primary structure comprises 261 residues: Probable septum site-determining protein MinC (261 aa).

Residues 106-144 (RAPAAKPADEAEPAAVPAVETAAAPAAAAAPEQSSDPAP) form a disordered region. The span at 118 to 144 (PAAVPAVETAAAPAAAAAPEQSSDPAP) shows a compositional bias: low complexity.

The protein belongs to the MinC family. As to quaternary structure, interacts with MinD and FtsZ.

Its function is as follows. Cell division inhibitor that blocks the formation of polar Z ring septums. Rapidly oscillates between the poles of the cell to destabilize FtsZ filaments that have formed before they mature into polar Z rings. Prevents FtsZ polymerization. This is Probable septum site-determining protein MinC from Burkholderia orbicola (strain MC0-3).